The primary structure comprises 394 residues: WAT1-related protein At2g40900 (394 aa).

Transmembrane regions (helical) follow at residues 13–33 (FAMV…KTVL), 40–60 (YVLV…FALL), 67–87 (SKMT…GPVI), 102–122 (TFSS…ATLF), 142–162 (LVTV…INFF), 180–200 (AAVF…LQAA), 209–229 (LSMS…LAFV), 245–265 (LLAS…VQGL), 273–293 (VFVT…SFFV), and 298–318 (IYLG…AVLW). EamA domains follow at residues 22–147 (YAGM…TVVG) and 189–317 (LSWA…YAVL).

It belongs to the drug/metabolite transporter (DMT) superfamily. Plant drug/metabolite exporter (P-DME) (TC 2.A.7.4) family.

Its subcellular location is the membrane. In Arabidopsis thaliana (Mouse-ear cress), this protein is WAT1-related protein At2g40900.